A 266-amino-acid polypeptide reads, in one-letter code: Ubiquinone biosynthesis protein COQ4 homolog, mitochondrial (266 aa).

His169, Asp170, His173, and Glu185 together coordinate Zn(2+).

The protein belongs to the COQ4 family. In terms of assembly, component of a multi-subunit COQ enzyme complex. Zn(2+) is required as a cofactor.

The protein localises to the mitochondrion inner membrane. It carries out the reaction a 4-hydroxy-3-methoxy-5-(all-trans-polyprenyl)benzoate + H(+) = a 2-methoxy-6-(all-trans-polyprenyl)phenol + CO2. It participates in cofactor biosynthesis; ubiquinone biosynthesis. Its function is as follows. Lyase that catalyzes the C1-decarboxylation of 4-hydroxy-3-methoxy-5-(all-trans-polyprenyl)benzoic acid into 2-methoxy-6-(all-trans-polyprenyl)phenol during ubiquinone biosynthesis. This chain is Ubiquinone biosynthesis protein COQ4 homolog, mitochondrial, found in Drosophila ananassae (Fruit fly).